The primary structure comprises 491 residues: Glycogen synthase 2 (491 aa).

Lys-16 serves as a coordination point for ADP-alpha-D-glucose.

It belongs to the glycosyltransferase 1 family. Bacterial/plant glycogen synthase subfamily.

The enzyme catalyses [(1-&gt;4)-alpha-D-glucosyl](n) + ADP-alpha-D-glucose = [(1-&gt;4)-alpha-D-glucosyl](n+1) + ADP + H(+). It participates in glycan biosynthesis; glycogen biosynthesis. Synthesizes alpha-1,4-glucan chains using ADP-glucose. This is Glycogen synthase 2 from Nitrosococcus oceani (strain ATCC 19707 / BCRC 17464 / JCM 30415 / NCIMB 11848 / C-107).